We begin with the raw amino-acid sequence, 341 residues long: Glucokinase (341 aa).

18–23 (GDIGGT) serves as a coordination point for ATP.

The protein belongs to the bacterial glucokinase family.

The protein localises to the cytoplasm. It carries out the reaction D-glucose + ATP = D-glucose 6-phosphate + ADP + H(+). The polypeptide is Glucokinase (Rhizobium etli (strain CIAT 652)).